We begin with the raw amino-acid sequence, 1009 residues long: DNA ligase 4 (1009 aa).

2 disordered regions span residues 1-34 (METDQDMHDQAMAGEETDLDEKYPNRPQNKAPTL) and 51-72 (KKKPVGPAGNRRKAGPHGLSAA). Positions 51-65 (KKKPVGPAGNRRKAG) are enriched in basic residues. The ATP site is built by glutamate 315, lysine 317, leucine 318, arginine 322, glutamate 384, phenylalanine 424, glutamate 484, lysine 489, lysine 506, and lysine 508. Catalysis depends on lysine 317, which acts as the N6-AMP-lysine intermediate. Glutamate 384 is a binding site for Mg(2+). Glutamate 484 contributes to the Mg(2+) binding site. BRCT domains lie at 715–808 (PSGH…PDLL) and 887–995 (PCGW…QHMP).

This sequence belongs to the ATP-dependent DNA ligase family. It depends on Mg(2+) as a cofactor.

The protein resides in the nucleus. The enzyme catalyses ATP + (deoxyribonucleotide)n-3'-hydroxyl + 5'-phospho-(deoxyribonucleotide)m = (deoxyribonucleotide)n+m + AMP + diphosphate.. DNA ligase involved in DNA non-homologous end joining (NHEJ); required for double-strand break (DSB) repair. This chain is DNA ligase 4 (lig4), found in Emericella nidulans (strain FGSC A4 / ATCC 38163 / CBS 112.46 / NRRL 194 / M139) (Aspergillus nidulans).